The following is a 397-amino-acid chain: Corticosteroid-binding globulin (397 aa).

Positions Met-1 to Ala-22 are cleaved as a signal peptide. 4 N-linked (GlcNAc...) asparagine glycosylation sites follow: Asn-89, Asn-169, Asn-217, and Asn-232. Residue Gln-247 coordinates cortisol. Asn-253 carries N-linked (GlcNAc...) asparagine glycosylation. Cortisol is bound at residue Asp-279. Asn-320 carries N-linked (GlcNAc...) asparagine glycosylation. Trp-385 lines the cortisol pocket.

The protein belongs to the serpin family. In terms of tissue distribution, expressed by the liver; secreted in plasma.

The protein localises to the secreted. Functionally, major transport protein for glucocorticoids and progestins in the blood of almost all vertebrate species. The sequence is that of Corticosteroid-binding globulin (Serpina6) from Mus musculus (Mouse).